We begin with the raw amino-acid sequence, 267 residues long: uncharacterized protein (267 aa).

The disordered stretch occupies residues 58–90; the sequence is RHTDDKQEKNQNEGEDNQKGENKTTDQQDGPKK. A run of 2 helical transmembrane segments spans residues 101 to 121 and 226 to 246; these read IYVL…LSQM and GMTT…AWLG.

It is found in the membrane. This is an uncharacterized protein from Caenorhabditis elegans.